Consider the following 404-residue polypeptide: Glycerol-1-phosphate dehydrogenase [NAD(P)+] (404 aa).

NAD(+) is bound by residues Asp56, 118-122, and 140-143; these read GTIHD and TAPS. Asp145 provides a ligand contact to substrate. Ser149 is a binding site for NAD(+). Position 192 (Asp192) interacts with substrate. Positions 192 and 272 each coordinate Ni(2+). His276 is a substrate binding site. Residue His292 participates in Ni(2+) binding.

It belongs to the glycerol-1-phosphate dehydrogenase family. Homodimer. Ni(2+) is required as a cofactor.

The protein localises to the cytoplasm. The catalysed reaction is sn-glycerol 1-phosphate + NAD(+) = dihydroxyacetone phosphate + NADH + H(+). It catalyses the reaction sn-glycerol 1-phosphate + NADP(+) = dihydroxyacetone phosphate + NADPH + H(+). Functionally, catalyzes the NAD(P)H-dependent reduction of dihydroxyacetonephosphate (DHAP or glycerone phosphate) to glycerol 1-phosphate (G1P). The G1P thus generated is probably used for the synthesis of phosphoglycerolipids in Gram-positive bacterial species. This is Glycerol-1-phosphate dehydrogenase [NAD(P)+] from Geobacillus stearothermophilus (Bacillus stearothermophilus).